A 207-amino-acid chain; its full sequence is 2,3-bisphosphoglycerate-dependent phosphoglycerate mutase (207 aa).

Substrate contacts are provided by residues Arg-10–Asn-17, Thr-23–Gly-24, Arg-62, Glu-89–Tyr-92, Lys-100, Arg-116–Arg-117, and Gly-160–Asn-161. His-11 (tele-phosphohistidine intermediate) is an active-site residue. Glu-89 acts as the Proton donor/acceptor in catalysis.

It belongs to the phosphoglycerate mutase family. BPG-dependent PGAM subfamily. As to quaternary structure, homodimer.

The enzyme catalyses (2R)-2-phosphoglycerate = (2R)-3-phosphoglycerate. Its pathway is carbohydrate degradation; glycolysis; pyruvate from D-glyceraldehyde 3-phosphate: step 3/5. Catalyzes the interconversion of 2-phosphoglycerate and 3-phosphoglycerate. In Nitrobacter hamburgensis (strain DSM 10229 / NCIMB 13809 / X14), this protein is 2,3-bisphosphoglycerate-dependent phosphoglycerate mutase.